The following is a 211-amino-acid chain: UPF0637 protein Bsph_1379 (211 aa).

Belongs to the UPF0637 family.

This Lysinibacillus sphaericus (strain C3-41) protein is UPF0637 protein Bsph_1379.